A 154-amino-acid chain; its full sequence is Aspartate carbamoyltransferase regulatory chain (154 aa).

Positions 109, 114, 138, and 141 each coordinate Zn(2+).

This sequence belongs to the PyrI family. In terms of assembly, contains catalytic and regulatory chains. It depends on Zn(2+) as a cofactor.

In terms of biological role, involved in allosteric regulation of aspartate carbamoyltransferase. This chain is Aspartate carbamoyltransferase regulatory chain, found in Methanothrix thermoacetophila (strain DSM 6194 / JCM 14653 / NBRC 101360 / PT) (Methanosaeta thermophila).